The following is a 188-amino-acid chain: Elongation factor P-like protein (188 aa).

Belongs to the elongation factor P family.

The chain is Elongation factor P-like protein from Stenotrophomonas maltophilia (strain R551-3).